A 297-amino-acid chain; its full sequence is uncharacterized protein (297 aa).

Residues 187 to 285 (EKLIATLHAS…GYAPSAVLKN (99 aa)) form the HTH araC/xylS-type domain. DNA-binding regions (H-T-H motif) lie at residues 204–225 (ADMAATIPCSEAWLRRLFLRYT) and 252–275 (VGEVADTLNFFDSFHFSKAFKHKF).

This is an uncharacterized protein from Escherichia coli (strain K12).